The chain runs to 206 residues: Thymidylate kinase (206 aa).

Position 11 to 18 (11 to 18 (GIDGAGKT)) interacts with ATP.

This sequence belongs to the thymidylate kinase family.

It catalyses the reaction dTMP + ATP = dTDP + ADP. Functionally, phosphorylation of dTMP to form dTDP in both de novo and salvage pathways of dTTP synthesis. The chain is Thymidylate kinase from Burkholderia pseudomallei (strain 1106a).